A 65-amino-acid chain; its full sequence is Large ribosomal subunit protein bL33m (65 aa).

A mitochondrion-targeting transit peptide spans 1–8 (MLLSAVSF).

It belongs to the bacterial ribosomal protein bL33 family. As to quaternary structure, component of the mitochondrial ribosome large subunit (39S) which comprises a 16S rRNA and about 50 distinct proteins.

It is found in the mitochondrion. In Mus musculus (Mouse), this protein is Large ribosomal subunit protein bL33m (Mrpl33).